A 236-amino-acid polypeptide reads, in one-letter code: Small ribosomal subunit protein uS2c (236 aa).

Belongs to the universal ribosomal protein uS2 family.

Its subcellular location is the plastid. The protein localises to the chloroplast. The polypeptide is Small ribosomal subunit protein uS2c (rps2) (Phaseolus vulgaris (Kidney bean)).